Consider the following 200-residue polypeptide: Large ribosomal subunit protein uL4 (200 aa).

The tract at residues 43–71 (RAQKTRAEVSGSGKKPWRQKGTGRARSGD) is disordered.

This sequence belongs to the universal ribosomal protein uL4 family. In terms of assembly, part of the 50S ribosomal subunit.

One of the primary rRNA binding proteins, this protein initially binds near the 5'-end of the 23S rRNA. It is important during the early stages of 50S assembly. It makes multiple contacts with different domains of the 23S rRNA in the assembled 50S subunit and ribosome. Its function is as follows. Forms part of the polypeptide exit tunnel. The chain is Large ribosomal subunit protein uL4 from Histophilus somni (strain 2336) (Haemophilus somnus).